Reading from the N-terminus, the 158-residue chain is Cyclic pyranopterin monophosphate synthase (158 aa).

Substrate contacts are provided by residues 76–78 (LCH) and 114–115 (ME). The active site involves aspartate 129.

It belongs to the MoaC family. As to quaternary structure, homohexamer; trimer of dimers.

It carries out the reaction (8S)-3',8-cyclo-7,8-dihydroguanosine 5'-triphosphate = cyclic pyranopterin phosphate + diphosphate. Its pathway is cofactor biosynthesis; molybdopterin biosynthesis. Catalyzes the conversion of (8S)-3',8-cyclo-7,8-dihydroguanosine 5'-triphosphate to cyclic pyranopterin monophosphate (cPMP). This is Cyclic pyranopterin monophosphate synthase from Shewanella woodyi (strain ATCC 51908 / MS32).